The chain runs to 1611 residues: SH3 domain-containing protein C23A1.17 (1611 aa).

An SH3 domain is found at 3 to 67 (SFPTRVVALY…PKDFTEPAED (65 aa)). 4 disordered regions span residues 275–648 (THPA…PTSL), 662–741 (IDPP…PPGL), 762–851 (AVPR…NSLN), and 886–1365 (TPST…FSAK). The segment covering 278-296 (AASSTMATESSHQSPSADS) has biased composition (polar residues). Residues 300–312 (ELSKSQRVAKDDD) are compositionally biased toward basic and acidic residues. Polar residues predominate over residues 316 to 330 (VSNTANSDEPASSSK). Acidic residues-rich tracts occupy residues 361-373 (SEQE…DAES) and 387-420 (SEPE…QIDP). Residues 421-433 (EEAKRIALRERMA) are compositionally biased toward basic and acidic residues. Residues 472–494 (STTNDSSPPKDSSSTSTQPTEQS) show a composition bias toward low complexity. The span at 576–586 (TQETSEQQVHK) shows a compositional bias: polar residues. Residues 605–619 (FDKETLASNEAHEAV) are compositionally biased toward basic and acidic residues. The segment covering 637–648 (SSSVVTPSPTSL) has biased composition (low complexity). 3 stretches are compositionally biased toward polar residues: residues 799-808 (SRPSTGSQLR), 886-902 (TPST…SNVA), and 923-940 (ATHQ…QLGS). 3 stretches are compositionally biased toward pro residues: residues 963 to 974 (PAAPPSIPPPLP), 1022 to 1053 (PPVP…PPVP), and 1076 to 1241 (IPAP…PVPA). Low complexity predominate over residues 1242–1278 (PSSEAPSVSTPRSSVPSPHSNASPSPTSSSMASAAPA). Residues Ser1258, Ser1261, and Ser1266 each carry the phosphoserine modification. The segment covering 1300 to 1312 (KSSKSGEHHHHHN) has biased composition (basic residues). Residues 1317–1327 (DSSSTRTSLAH) show a composition bias toward polar residues. Low complexity predominate over residues 1340–1350 (RSSSRASKKPS). Polar residues predominate over residues 1351–1362 (IVSTTGPFNESF). At Ser1379 the chain carries Phosphoserine. Thr1380 carries the post-translational modification Phosphothreonine.

The protein localises to the cytoplasm. This chain is SH3 domain-containing protein C23A1.17, found in Schizosaccharomyces pombe (strain 972 / ATCC 24843) (Fission yeast).